Here is a 500-residue protein sequence, read N- to C-terminus: Glutamate--tRNA ligase (500 aa).

Positions 12-22 match the 'HIGH' region motif; the sequence is PSPTGHLHIGN. The short motif at 259 to 263 is the 'KMSKS' region element; that stretch reads KLSKR. K262 contacts ATP.

Belongs to the class-I aminoacyl-tRNA synthetase family. Glutamate--tRNA ligase type 1 subfamily. As to quaternary structure, monomer.

Its subcellular location is the cytoplasm. It catalyses the reaction tRNA(Glu) + L-glutamate + ATP = L-glutamyl-tRNA(Glu) + AMP + diphosphate. Functionally, catalyzes the attachment of glutamate to tRNA(Glu) in a two-step reaction: glutamate is first activated by ATP to form Glu-AMP and then transferred to the acceptor end of tRNA(Glu). This chain is Glutamate--tRNA ligase, found in Lactobacillus delbrueckii subsp. bulgaricus.